Reading from the N-terminus, the 834-residue chain is DNA-directed RNA polymerase subunit beta' (834 aa).

Zn(2+) is bound by residues cysteine 88, cysteine 90, cysteine 104, and cysteine 107. Residues aspartate 641, aspartate 643, and aspartate 645 each coordinate Mg(2+).

The protein belongs to the RNA polymerase beta' chain family. RpoC1 subfamily. As to quaternary structure, in plastids the minimal PEP RNA polymerase catalytic core is composed of four subunits: alpha, beta, beta', and beta''. When a (nuclear-encoded) sigma factor is associated with the core the holoenzyme is formed, which can initiate transcription. Mg(2+) is required as a cofactor. Zn(2+) serves as cofactor.

It is found in the plastid. It catalyses the reaction RNA(n) + a ribonucleoside 5'-triphosphate = RNA(n+1) + diphosphate. Functionally, DNA-dependent RNA polymerase catalyzes the transcription of DNA into RNA using the four ribonucleoside triphosphates as substrates. This chain is DNA-directed RNA polymerase subunit beta' (rpoC1), found in Helicosporidium sp. subsp. Simulium jonesii (Green alga).